Here is a 537-residue protein sequence, read N- to C-terminus: Protein ST7 homolog (537 aa).

A helical membrane pass occupies residues 15-35; sequence FYVALTGTSSLISGLILIFEW. Residues 61–111 form a disordered region; that stretch reads SDGQSESSNGSGSSSSSGSSSSSNGGAGGGGSGGAGASGSGSATTSTGTQM. Positions 67-84 are enriched in low complexity; it reads SSNGSGSSSSSGSSSSSN. Gly residues predominate over residues 85 to 99; it reads GGAGGGGSGGAGASG. Residues 100-109 show a composition bias toward low complexity; sequence SGSATTSTGT. Residues 472–492 traverse the membrane as a helical segment; that stretch reads LPFFILFTAGLCSITALLALA.

The protein belongs to the ST7 family.

The protein resides in the membrane. The sequence is that of Protein ST7 homolog from Drosophila melanogaster (Fruit fly).